The following is a 210-amino-acid chain: Ribonuclease HII (210 aa).

The region spanning 18–208 (YPVAGIDEAG…VNDIISQTKL (191 aa)) is the RNase H type-2 domain. A divalent metal cation-binding residues include aspartate 24, glutamate 25, and aspartate 116.

The protein belongs to the RNase HII family. Mn(2+) serves as cofactor. Requires Mg(2+) as cofactor.

It is found in the cytoplasm. The enzyme catalyses Endonucleolytic cleavage to 5'-phosphomonoester.. Endonuclease that specifically degrades the RNA of RNA-DNA hybrids. In Endomicrobium trichonymphae, this protein is Ribonuclease HII.